A 426-amino-acid polypeptide reads, in one-letter code: UPF0329 protein ECU06_0040 (426 aa).

Residues 136–172 are compositionally biased toward basic and acidic residues; that stretch reads RQRKREEETERSVKELVGDEEKAKSKEEKAKSKEEKA. The interval 136 to 230 is disordered; that stretch reads RQRKREEETE…GGKKKSKGGR (95 aa). Over residues 220 to 230 the composition is skewed to basic residues; it reads KGGKKKSKGGR.

The protein belongs to the UPF0329 family.

In Encephalitozoon cuniculi (strain GB-M1) (Microsporidian parasite), this protein is UPF0329 protein ECU06_0040.